We begin with the raw amino-acid sequence, 218 residues long: ATP phosphoribosyltransferase (218 aa).

The protein belongs to the ATP phosphoribosyltransferase family. Short subfamily. As to quaternary structure, heteromultimer composed of HisG and HisZ subunits.

Its subcellular location is the cytoplasm. It catalyses the reaction 1-(5-phospho-beta-D-ribosyl)-ATP + diphosphate = 5-phospho-alpha-D-ribose 1-diphosphate + ATP. It functions in the pathway amino-acid biosynthesis; L-histidine biosynthesis; L-histidine from 5-phospho-alpha-D-ribose 1-diphosphate: step 1/9. Functionally, catalyzes the condensation of ATP and 5-phosphoribose 1-diphosphate to form N'-(5'-phosphoribosyl)-ATP (PR-ATP). Has a crucial role in the pathway because the rate of histidine biosynthesis seems to be controlled primarily by regulation of HisG enzymatic activity. The protein is ATP phosphoribosyltransferase of Burkholderia thailandensis (strain ATCC 700388 / DSM 13276 / CCUG 48851 / CIP 106301 / E264).